A 2049-amino-acid polypeptide reads, in one-letter code: Polyunsaturated fatty acid synthase subunit B (2049 aa).

2 Ketosynthase family 3 (KS3) domains span residues 15–442 (EKRI…VFEE) and 468–908 (NMRI…LLSD). Active-site for beta-ketoacyl synthase 1 activity residues include Cys196, His333, and His368. The interval 467 to 984 (NNMRIAITGM…LGETLAQEAD (518 aa)) is chain length factor (CLF) domain. Residues 1044–1377 (RVAFMYGEGR…QRSHVTGAMD (334 aa)) are acyltransferase (AT) domain. The tract at residues 1500-1531 (NKDNQPAVAPAATAAPTPKPKPAASSGKPVPS) is disordered. Low complexity predominate over residues 1505–1531 (PAVAPAATAAPTPKPKPAASSGKPVPS). The interval 1579–1887 (SRAFMKTYGV…SRANKLYELF (309 aa)) is enoyl reductase (ER) domain.

Component of the polyunsaturated fatty acid synthase complex composed of at least ORF-A, ORF-B and ORF-C.

The protein operates within lipid metabolism; fatty acid biosynthesis. Functionally, poliketide synthase-like protein; part of the polyunsaturated fatty acid synthase composed of the 3 PKS-like subunits A, B and C. While the saturated fatty acids (SFAs) in Thraustochytrium are produced by the conventional fatty acid synthase (FAS) pathway, polyunsaturated fatty acids (PUFAs) including docosahexeanoic acid (DHA) and docosapentaenoic acid (DPA) are synthesized via an anaerobical PKS pathway. PUFA synthase assimilates fatty acyl-CoA, the product of FAS, as the starter unit to synthesize DPA, and this starter unit may be butyryl-CoA, hexanoyl-CoA, or octanoyl-CoA. DPA and DHA biosynthesis seem to differ by the reduction at the N-3 position by PUFA synthase, not the extension of carbon chain. In DHA biosynthesis, PUFA synthase extends the fatty acyl chain from the methyl toward the carboxyl end, and the double bond is formed when the carbon chain is growing, instead of afterward. Therefore, PUFA synthase is unable to transform DPA to DHA, suggesting that DPA is not the precursor of DHA. Moreover, DPA molecule is partly extended by FAS KS domain, so DPA biosynthesis is less dependent on PUFA synthase KS domain than DHA. This is Polyunsaturated fatty acid synthase subunit B from Thraustochytrium sp. (strain ATCC 26185 / S-3).